An 853-amino-acid polypeptide reads, in one-letter code: Wolframin (853 aa).

The tract at residues 139–179 is disordered; the sequence is KQLERKMRRIYNLQRKRRRRDDDRSSSSSEGEQEPECEPLE. Over residues 144–157 the composition is skewed to basic residues; that stretch reads KMRRIYNLQRKRRR. The segment covering 169 to 179 has biased composition (acidic residues); it reads GEQEPECEPLE. Transmembrane regions (helical) follow at residues 238-258, 259-279, 285-305, 347-367, 373-393, 446-466, 473-493, 513-533, 545-565, and 572-592; these read MIFH…NLIV, SIPN…ISWW, LPLV…CKML, LYFF…TDAW, LTII…YASS, FCLN…IMMA, GVYT…VCIA, IVLF…FVAI, WGST…LALN, and ITML…LPYM. Residues Asn694 and Asn769 are each glycosylated (N-linked (GlcNAc...) asparagine).

As to expression, detected in adult brain.

The protein resides in the membrane. The protein localises to the endoplasmic reticulum. Its subcellular location is the mitochondrion. Its function is as follows. Participates in the regulation of cellular Ca(2+) homeostasis, at least partly, by modulating the filling state of the endoplasmic reticulum Ca(2+) store. In neurons and glial cells, has a role in maintaining neuronal function and integrity during aging. The chain is Wolframin from Drosophila melanogaster (Fruit fly).